The following is a 204-amino-acid chain: Recombination protein RecR (204 aa).

The C4-type zinc finger occupies 58–75; sequence CSICQNVTDRDADPCRIC. The region spanning 83 to 181 is the Toprim domain; the sequence is SVICVVESPV…MVTKIARGIP (99 aa).

It belongs to the RecR family.

Functionally, may play a role in DNA repair. It seems to be involved in an RecBC-independent recombinational process of DNA repair. It may act with RecF and RecO. The sequence is that of Recombination protein RecR from Chlorobium phaeovibrioides (strain DSM 265 / 1930) (Prosthecochloris vibrioformis (strain DSM 265)).